Reading from the N-terminus, the 121-residue chain is Acid shock protein (121 aa).

The N-terminal stretch at 1 to 21 (MKKVLALMVAATLGLSSVAFA) is a signal peptide. Positions 22 to 63 (ADTTATATPAATSTTATVAAQTKATQHQKHKVTKKTTEQKAQ) are excised as a propeptide. Residues 40 to 121 (AAQTKATQHQ…AKKPVAAPAA (82 aa)) form a disordered region. Low complexity predominate over residues 74–83 (VQKAPVQKAQ). Over residues 84-93 (AAKKHVKKAS) the composition is skewed to basic residues. The span at 94 to 103 (VQKAPVQKAQ) shows a compositional bias: low complexity. Over residues 104–113 (AAKKHHKTAK) the composition is skewed to basic residues.

The protein belongs to the Asr family. Post-translationally, proteolytic processing gives rise to the active protein.

It localises to the periplasm. Required for growth and/or survival at acidic conditions. This is Acid shock protein from Yersinia pseudotuberculosis serotype O:1b (strain IP 31758).